Consider the following 631-residue polypeptide: Occlusion-derived virus envelope protein E66 (631 aa).

The protein belongs to the baculoviridae E66 family.

It localises to the virion membrane. Its function is as follows. Component of the polyhedra envelope. This Leucania separata nucleopolyhedrovirus (LsNPV) protein is Occlusion-derived virus envelope protein E66.